The following is a 118-amino-acid chain: Large ribosomal subunit protein uL18 (118 aa).

The protein belongs to the universal ribosomal protein uL18 family. Part of the 50S ribosomal subunit; part of the 5S rRNA/L5/L18/L25 subcomplex. Contacts the 5S and 23S rRNAs.

Functionally, this is one of the proteins that bind and probably mediate the attachment of the 5S RNA into the large ribosomal subunit, where it forms part of the central protuberance. The sequence is that of Large ribosomal subunit protein uL18 from Helicobacter pylori (strain J99 / ATCC 700824) (Campylobacter pylori J99).